We begin with the raw amino-acid sequence, 259 residues long: Bidirectional sugar transporter SWEET6a (259 aa).

At 1–9 (MISPDAARN) the chain is on the extracellular side. The chain crosses the membrane as a helical span at residues 10–30 (VVGIIGNVISFGLFLAPVPTF). A MtN3/slv 1 domain is found at 10 to 98 (VVGIIGNVIS…IFFLYSPNKK (89 aa)). Residues 31–45 (WRICKRKDVEEFKAD) lie on the Cytoplasmic side of the membrane. Residues 46–66 (PYLATLLNCMLWVFYGIPVVH) traverse the membrane as a helical segment. The Extracellular portion of the chain corresponds to 67–69 (PNS). The chain crosses the membrane as a helical span at residues 70 to 90 (ILVVTINGIGLLVEGTYLLIF). Over 91–103 (FLYSPNKKRLRMC) the chain is Cytoplasmic. Residues 104–124 (AVLGVELVFMLAVILGVLLGA) form a helical membrane-spanning segment. Residues 125-131 (HTHEKRS) lie on the Extracellular side of the membrane. Residues 132–152 (MIVGILCVFFGSIMYFSPLTI) form a helical membrane-spanning segment. One can recognise a MtN3/slv 2 domain in the interval 133-216 (IVGILCVFFG…LILYACYYRT (84 aa)). Residues 153 to 165 (MGKVIKTKSVEYM) lie on the Cytoplasmic side of the membrane. The chain crosses the membrane as a helical span at residues 166 to 186 (PFFLSLVCFLNGVCWTAYALI). At 187–189 (RFD) the chain is on the extracellular side. Residues 190–210 (IYVTIPNGLGALFGAIQLILY) traverse the membrane as a helical segment. Residues 211–259 (ACYYRTTPKKTKAAKDVEMPSVVVSGTGAAAAAGGGNTGGGSISVTVER) lie on the Cytoplasmic side of the membrane.

The protein belongs to the SWEET sugar transporter family. In terms of assembly, forms homooligomers and/or heterooligomers.

It localises to the cell membrane. Functionally, mediates both low-affinity uptake and efflux of sugar across the plasma membrane. The protein is Bidirectional sugar transporter SWEET6a (SWEET6A) of Oryza sativa subsp. indica (Rice).